The following is a 342-amino-acid chain: N-acetyl-gamma-glutamyl-phosphate reductase (342 aa).

Cys149 is an active-site residue.

Belongs to the NAGSA dehydrogenase family. Type 1 subfamily.

It localises to the cytoplasm. The enzyme catalyses N-acetyl-L-glutamate 5-semialdehyde + phosphate + NADP(+) = N-acetyl-L-glutamyl 5-phosphate + NADPH + H(+). Its pathway is amino-acid biosynthesis; L-arginine biosynthesis; N(2)-acetyl-L-ornithine from L-glutamate: step 3/4. Functionally, catalyzes the NADPH-dependent reduction of N-acetyl-5-glutamyl phosphate to yield N-acetyl-L-glutamate 5-semialdehyde. This Cereibacter sphaeroides (strain ATCC 17023 / DSM 158 / JCM 6121 / CCUG 31486 / LMG 2827 / NBRC 12203 / NCIMB 8253 / ATH 2.4.1.) (Rhodobacter sphaeroides) protein is N-acetyl-gamma-glutamyl-phosphate reductase.